The following is a 607-amino-acid chain: Matrix metalloproteinase-16 (607 aa).

Residues 1 to 31 (MILLAFSSGRRLDFVHRSGVFFFQTLLWILC) form the signal peptide. Positions 32-119 (ATVCGTEQYF…SSKFNIRRKR (88 aa)) are excised as a propeptide. Asparagine 83 carries N-linked (GlcNAc...) asparagine glycosylation. Positions 99 to 106 (PRCGVPDQ) match the Cysteine switch motif. Cysteine 101 lines the Zn(2+) pocket. Residues 120–564 (YALTGQKWQH…LDNTASTVKA (445 aa)) are Extracellular-facing. Aspartate 183 serves as a coordination point for Ca(2+). Positions 193 and 195 each coordinate Zn(2+). The Ca(2+) site is built by aspartate 200, glycine 201, glycine 203, and phenylalanine 205. Residue histidine 208 participates in Zn(2+) binding. Positions 215, 217, and 219 each coordinate Ca(2+). Histidine 221 contacts Zn(2+). Positions 223 and 226 each coordinate Ca(2+). Residue histidine 246 coordinates Zn(2+). Glutamate 247 is a catalytic residue. 2 residues coordinate Zn(2+): histidine 250 and histidine 256. Positions 281 to 340 (DDLQGIQKIYGPPDKIPPPTRPLPTVPPHRSVPPADPRKNDRPKPPRPPTGRPSYPGAKP) are disordered. Positions 294–315 (DKIPPPTRPLPTVPPHRSVPPA) are enriched in pro residues. Hemopexin repeat units follow at residues 340 to 388 (PNIC…WRGL), 389 to 434 (PPSI…GNGI), 436 to 484 (PHGI…KGIP), and 485 to 532 (ESPQ…FMGC). Cysteine 343 and cysteine 532 are joined by a disulfide. Residues 565 to 585 (IAIVIPCILALCLLVLVYTVF) form a helical membrane-spanning segment. The Cytoplasmic segment spans residues 586–607 (QFKRKGTPRHILYCKRSMQEWV).

It belongs to the peptidase M10A family. As to quaternary structure, interacts with CSPG4 through CSPG4 chondroitin sulfate glycosaminoglycan. Zn(2+) is required as a cofactor. The cofactor is Ca(2+). In terms of processing, the precursor is cleaved by a furin endopeptidase. In terms of tissue distribution, strongly expressed in the lung, brain and smooth muscle cells. Weakly detectable in the spleen and liver and indetectable in the heart, skeletal muscle and kidney.

The protein localises to the cell membrane. It is found in the secreted. Its subcellular location is the extracellular space. It localises to the extracellular matrix. In terms of biological role, endopeptidase that degrades various components of the extracellular matrix, such as collagen type III and fibronectin. Activates progelatinase A. Involved in the matrix remodeling of blood vessels. The short isoform efficiently converts progelatinase A to the intermediate form but not to the mature one. It has no effect on type I, II, IV and V collagen. However, upon interaction with CSPG4, it may be involved in degradation and invasion of type I collagen by melanoma cells. The sequence is that of Matrix metalloproteinase-16 (Mmp16) from Rattus norvegicus (Rat).